A 292-amino-acid polypeptide reads, in one-letter code: MGSSCLPPGFRFHPTDEELIEYYLKRKVEGLEIELEVIPVIDLYSFDPWELPDKSFLPNRDMEWYFFCSRDKKYPNGFRTNRGTKAGYWKATGKDRKITSRSSSIIGYRKTLVFYKGRAPLGDRSNWIMHEYRLCDDDTSQGSQNLKGAFVLCRVAMKNEIKTNTKIRKIPSEQTIGSGESSGLSSRVTSPSRDETMPFHSFANPVSTETDSSNIWISPEFILDSSKDYPQIQDVASQCFQQDFDFPIIGNQNMEFPASTSLDQNMDEFMQNGYWTNYGYDQTGLFGYSDFS.

Residues 6–158 (LPPGFRFHPT…AFVLCRVAMK (153 aa)) enclose the NAC domain. A DNA-binding region spans residues 106 to 164 (IGYRKTLVFYKGRAPLGDRSNWIMHEYRLCDDDTSQGSQNLKGAFVLCRVAMKNEIKTN). Positions 171–199 (PSEQTIGSGESSGLSSRVTSPSRDETMPF) are disordered. Polar residues predominate over residues 172-191 (SEQTIGSGESSGLSSRVTSP).

In terms of assembly, interacts with ABF2 and ABF4. As to expression, expressed in roots, rosettes leaves, cauline leaves and stems.

The protein localises to the nucleus. Its function is as follows. Transcriptional activator involved in the positive regulation of abscisic acid (ABA) responsive genes. Acts as a positive factor of ABA-mediated responses. Involved in the transcriptional activation of ABA-inducible genes in response to dehydration and osmotic stresses. Plays a positive role in both stomatal closure and water loss under dehydration stress conditions. Acts synergistically with ABF2 to activate the dehydration stress-response factor RD29A transcription. Binds to the consensus core cis-acting elements 5'-CGTA-3' and 5'-CACG-3' at the RD29A promoter. Involved in hypocotyl graft union formation. Required for the auxin-mediated promotion of vascular tissue proliferation during hypocotyl graft attachment. This chain is NAC domain-containing protein 96, found in Arabidopsis thaliana (Mouse-ear cress).